We begin with the raw amino-acid sequence, 388 residues long: Succinate--CoA ligase [ADP-forming] subunit beta (388 aa).

Positions 9 to 244 (KALFAEYGLP…PSQDDAREAH (236 aa)) constitute an ATP-grasp domain. Residues lysine 46, 53 to 55 (GRG), glutamate 99, threonine 102, and glutamate 107 contribute to the ATP site. Mg(2+) is bound by residues asparagine 199 and aspartate 213. Residues asparagine 264 and 321–323 (GIV) contribute to the substrate site.

The protein belongs to the succinate/malate CoA ligase beta subunit family. In terms of assembly, heterotetramer of two alpha and two beta subunits. The cofactor is Mg(2+).

The enzyme catalyses succinate + ATP + CoA = succinyl-CoA + ADP + phosphate. It carries out the reaction GTP + succinate + CoA = succinyl-CoA + GDP + phosphate. The protein operates within carbohydrate metabolism; tricarboxylic acid cycle; succinate from succinyl-CoA (ligase route): step 1/1. Succinyl-CoA synthetase functions in the citric acid cycle (TCA), coupling the hydrolysis of succinyl-CoA to the synthesis of either ATP or GTP and thus represents the only step of substrate-level phosphorylation in the TCA. The beta subunit provides nucleotide specificity of the enzyme and binds the substrate succinate, while the binding sites for coenzyme A and phosphate are found in the alpha subunit. This chain is Succinate--CoA ligase [ADP-forming] subunit beta, found in Shewanella pealeana (strain ATCC 700345 / ANG-SQ1).